The chain runs to 321 residues: Gap junction delta-2 protein (321 aa).

At 1-19 the chain is on the cytoplasmic side; that stretch reads MGEWTILERLLEAAVQQHS. A helical transmembrane segment spans residues 20–42; that stretch reads TMIGRILLTVVVIFRILIVAIVG. Residues 43–75 are Extracellular-facing; sequence ETVYDDEQTMFVCNTLQPGCNQACYDRAFPISH. The helical transmembrane segment at 76-98 threads the bilayer; the sequence is IRYWVFQIIMVCTPSLCFITYSV. The Cytoplasmic portion of the chain corresponds to 99–197; sequence HQSAKQRERR…KLRRQEGISR (99 aa). Residues 120–141 form a disordered region; the sequence is PAESIGGPGGTGGGGSGGSKRE. Gly residues predominate over residues 125 to 137; the sequence is GGPGGTGGGGSGG. A helical membrane pass occupies residues 198 to 220; that stretch reads FYIIQVVFRNALEIGFLVGQYFL. Residues 221–252 are Extracellular-facing; sequence YGFSVPGLYECNRYPCIKEVECYVSRPTEKTV. The helical transmembrane segment at 253-275 threads the bilayer; that stretch reads FLVFMFAVSGICVVLNLAELNHL. Topologically, residues 276 to 321 are cytoplasmic; the sequence is GWRKIKLAVRGAQAKRKSVYEIRNKDLPRVSVPNFGRTQSSDSAYV.

It belongs to the connexin family. Delta-type subfamily. In terms of assembly, a connexon is composed of a hexamer of connexins. As to expression, highly expressed in neurons.

The protein localises to the cell membrane. It localises to the cell junction. It is found in the gap junction. Functionally, one gap junction consists of a cluster of closely packed pairs of transmembrane channels, the connexons, through which materials of low MW diffuse from one cell to a neighboring cell. In Mus musculus (Mouse), this protein is Gap junction delta-2 protein (Gjd2).